A 228-amino-acid chain; its full sequence is Fluoride-specific ion channel FluC (228 aa).

7 consecutive transmembrane segments (helical) span residues 3–23 (LSLF…FWVS), 37–57 (GTLF…VMMI), 72–92 (VGFL…LALF), 101–121 (ALNV…GAVL), 141–161 (IFGA…LAFA), 172–192 (LVLV…LVVT), and 202–222 (LWGA…LGLV). The Na(+) site is built by glycine 76 and threonine 79.

Belongs to the fluoride channel Fluc/FEX (TC 1.A.43) family.

It localises to the cell inner membrane. It carries out the reaction fluoride(in) = fluoride(out). Na(+) is not transported, but it plays an essential structural role and its presence is essential for fluoride channel function. Fluoride-specific ion channel. Important for reducing fluoride concentration in the cell, thus reducing its toxicity. The chain is Fluoride-specific ion channel FluC from Methylococcus capsulatus (strain ATCC 33009 / NCIMB 11132 / Bath).